The sequence spans 721 residues: Polyribonucleotide nucleotidyltransferase (721 aa).

The Mg(2+) site is built by D495 and D501. The KH domain occupies 562-621 (PRLLSFRIDPELIGTVIGPGGRTIKGITERTNTKIDIEDGGIVTIASHDGAAAEEAQKII). In terms of domain architecture, S1 motif spans 631 to 699 (GEIFTGVVTR…SRGRINLTLR (69 aa)). The disordered stretch occupies residues 702-721 (SQNSGMSYPEPTPTPVAPLN). Over residues 711–721 (EPTPTPVAPLN) the composition is skewed to pro residues.

Belongs to the polyribonucleotide nucleotidyltransferase family. Requires Mg(2+) as cofactor.

Its subcellular location is the cytoplasm. It catalyses the reaction RNA(n+1) + phosphate = RNA(n) + a ribonucleoside 5'-diphosphate. Its function is as follows. Involved in mRNA degradation. Catalyzes the phosphorolysis of single-stranded polyribonucleotides processively in the 3'- to 5'-direction. The protein is Polyribonucleotide nucleotidyltransferase of Prochlorococcus marinus (strain MIT 9312).